A 298-amino-acid chain; its full sequence is Nucleotide-binding protein MLBr00563 (298 aa).

21–28 is an ATP binding site; sequence GLSGAGRG. 72–75 lines the GTP pocket; that stretch reads DVRS.

Belongs to the RapZ-like family.

In terms of biological role, displays ATPase and GTPase activities. In Mycobacterium leprae (strain Br4923), this protein is Nucleotide-binding protein MLBr00563.